Consider the following 58-residue polypeptide: uncharacterized protein (58 aa).

Residues 18–38 (WLMIVLLFCSTGMVFLATILE) form a helical membrane-spanning segment.

It localises to the membrane. This is an uncharacterized protein from Saccharomyces cerevisiae (strain ATCC 204508 / S288c) (Baker's yeast).